We begin with the raw amino-acid sequence, 433 residues long: MIVKEINPHFEDYVFNWEQTYQFLVGGYGSSKSYHTALKIVLKLLKEKRTALVIREVFDTHRDSTFALFQEVIEELGLTKAVASLSSPLQLRFHNGSRIMFKGMDNPAKLKSVHNISLIWIEECSEVKYEGFKELIGRLRHPELKLHMICTTNPVGTSNWTYRHFFRDERKKRFVLDDSELYEKRTIVKGDTYYHHSTANDNLFLPESYVKQLDGLKEYDPDLYRIARKGRFGVNGIRVLPQFEVLPHDQVKKCIAAISKPIFRTGMDFGFEESYNAVVRLAVDPEKKYLYIYWEYYQNKMTDDRTAEELREFIETQELIKADSAEPKSIQYFRQQGFRMVGARKFPGSRLQYTKKVKRFKKIFCSDRCENVIYELETLTYAKDKNGALIEDEFTIDPHTLSAIWYALDDYEVADMKETAHKRMRPNRERRRS.

It to B.subtilis YqaT and phage SPP1 terminase large subunit. In terms of assembly, dimer of a small and a large subunit.

Functionally, functions as a terminase. This Bacillus subtilis (strain 168) protein is PBSX phage terminase large subunit (xtmB).